We begin with the raw amino-acid sequence, 153 residues long: Heavy metal-associated isoprenylated plant protein 26 (153 aa).

The HMA domain maps to 25–89; that stretch reads LQTVEIKVKM…MSHRTGKKVE (65 aa). A metal cation-binding residues include cysteine 36 and cysteine 39. Residue cysteine 150 is modified to Cysteine methyl ester. Cysteine 150 is lipidated: S-farnesyl cysteine. Positions 151 to 153 are cleaved as a propeptide — removed in mature form; sequence VVM.

The protein belongs to the HIPP family. In terms of assembly, interacts with ZHD11/HB29 and ACBP2 (via ankyrin repeats). May also interact with HB21. In terms of tissue distribution, expressed in roots, stems and flowers. Lower expression in siliques and leaves. Expressed in the vascular tissues. Detected in lateral roots, shoot apical meristem, petals of unopened flowers and weak expression in leaf vasculature.

The protein resides in the nucleus membrane. The protein localises to the cell membrane. Heavy-metal-binding protein. Binds lead, cadmium and copper. May be involved in heavy-metal transport. May be involved in cadmium transport and play a role in cadmium detoxification. This Arabidopsis thaliana (Mouse-ear cress) protein is Heavy metal-associated isoprenylated plant protein 26.